The following is a 66-amino-acid chain: Large ribosomal subunit protein bL33c (66 aa).

Belongs to the bacterial ribosomal protein bL33 family.

It is found in the plastid. The protein resides in the chloroplast. In Cryptomeria japonica (Japanese cedar), this protein is Large ribosomal subunit protein bL33c.